Reading from the N-terminus, the 626-residue chain is Chaperone protein DnaK (626 aa).

At threonine 175 the chain carries Phosphothreonine; by autocatalysis. Disordered regions lie at residues 469-488, 498-517, and 583-626; these read DKGT…GLPK, AEAH…TRNQ, and AQQG…KDNK. The span at 498–516 shows a compositional bias: basic and acidic residues; sequence AEAHEAEDKKRKEDAETRN. Over residues 609–626 the composition is skewed to acidic residues; that stretch reads SDDDVVDAEVVDDDKDNK.

It belongs to the heat shock protein 70 family.

In terms of biological role, acts as a chaperone. In Bifidobacterium adolescentis (strain ATCC 15703 / DSM 20083 / NCTC 11814 / E194a), this protein is Chaperone protein DnaK.